Here is a 259-residue protein sequence, read N- to C-terminus: Ribonuclease HII (259 aa).

The region spanning T70–E258 is the RNase H type-2 domain. Residues D76, E77, and D168 each contribute to the a divalent metal cation site.

It belongs to the RNase HII family. The cofactor is Mn(2+). It depends on Mg(2+) as a cofactor.

It localises to the cytoplasm. The catalysed reaction is Endonucleolytic cleavage to 5'-phosphomonoester.. Endonuclease that specifically degrades the RNA of RNA-DNA hybrids. In Streptococcus pneumoniae (strain 70585), this protein is Ribonuclease HII.